A 118-amino-acid chain; its full sequence is uncharacterized protein (118 aa).

The interval 1–118 (MASARGAKQS…AARQNEKTAR (118 aa)) is disordered. The segment covering 13 to 28 (RVGTTRYTETSTVRVE) has biased composition (low complexity). The span at 29 to 49 (TSSHRVETSSRRVETSQRRSE) shows a compositional bias: basic and acidic residues.

This is an uncharacterized protein from Homo sapiens (Human).